A 422-amino-acid polypeptide reads, in one-letter code: Gamma-glutamyl phosphate reductase (422 aa).

This sequence belongs to the gamma-glutamyl phosphate reductase family.

It is found in the cytoplasm. The catalysed reaction is L-glutamate 5-semialdehyde + phosphate + NADP(+) = L-glutamyl 5-phosphate + NADPH + H(+). The protein operates within amino-acid biosynthesis; L-proline biosynthesis; L-glutamate 5-semialdehyde from L-glutamate: step 2/2. In terms of biological role, catalyzes the NADPH-dependent reduction of L-glutamate 5-phosphate into L-glutamate 5-semialdehyde and phosphate. The product spontaneously undergoes cyclization to form 1-pyrroline-5-carboxylate. The sequence is that of Gamma-glutamyl phosphate reductase from Chloroflexus aurantiacus (strain ATCC 29366 / DSM 635 / J-10-fl).